A 265-amino-acid polypeptide reads, in one-letter code: Methylthioribulose-1-phosphate dehydratase (265 aa).

C116 serves as a coordination point for substrate. Residues H134 and H136 each coordinate Zn(2+). The Proton donor/acceptor role is filled by E159. H224 is a Zn(2+) binding site.

It belongs to the aldolase class II family. MtnB subfamily. Requires Zn(2+) as cofactor.

The protein resides in the cytoplasm. The catalysed reaction is 5-(methylsulfanyl)-D-ribulose 1-phosphate = 5-methylsulfanyl-2,3-dioxopentyl phosphate + H2O. It participates in amino-acid biosynthesis; L-methionine biosynthesis via salvage pathway; L-methionine from S-methyl-5-thio-alpha-D-ribose 1-phosphate: step 2/6. Its function is as follows. Catalyzes the dehydration of methylthioribulose-1-phosphate (MTRu-1-P) into 2,3-diketo-5-methylthiopentyl-1-phosphate (DK-MTP-1-P). The polypeptide is Methylthioribulose-1-phosphate dehydratase (Debaryomyces hansenii (strain ATCC 36239 / CBS 767 / BCRC 21394 / JCM 1990 / NBRC 0083 / IGC 2968) (Yeast)).